Here is a 382-residue protein sequence, read N- to C-terminus: Nitric oxide reductase FlRd-NAD(+) reductase (382 aa).

Belongs to the FAD-dependent oxidoreductase family. FAD serves as cofactor.

The protein localises to the cytoplasm. It carries out the reaction 2 reduced [nitric oxide reductase rubredoxin domain] + NAD(+) + H(+) = 2 oxidized [nitric oxide reductase rubredoxin domain] + NADH. It participates in nitrogen metabolism; nitric oxide reduction. In terms of biological role, one of at least two accessory proteins for anaerobic nitric oxide (NO) reductase. Reduces the rubredoxin moiety of NO reductase. In Vibrio vulnificus (strain YJ016), this protein is Nitric oxide reductase FlRd-NAD(+) reductase.